An 860-amino-acid polypeptide reads, in one-letter code: Beta-glucosidase A (860 aa).

Residues methionine 1 to alanine 19 form the signal peptide. N-linked (GlcNAc...) asparagine glycosylation is found at asparagine 61, asparagine 211, and asparagine 252. The active site involves aspartate 280. N-linked (GlcNAc...) asparagine glycans are attached at residues asparagine 315, asparagine 322, asparagine 354, asparagine 387, asparagine 442, asparagine 523, asparagine 542, asparagine 564, asparagine 658, asparagine 690, and asparagine 712. The tract at residues serine 719 to glycine 753 is disordered.

The protein belongs to the glycosyl hydrolase 3 family.

It localises to the secreted. The enzyme catalyses Hydrolysis of terminal, non-reducing beta-D-glucosyl residues with release of beta-D-glucose.. Its pathway is glycan metabolism; cellulose degradation. In terms of biological role, beta-glucosidases are one of a number of cellulolytic enzymes involved in the degradation of cellulosic biomass. Catalyzes the last step releasing glucose from the inhibitory cellobiose. The sequence is that of Beta-glucosidase A (bglA) from Aspergillus kawachii (strain NBRC 4308) (White koji mold).